The primary structure comprises 427 residues: Glutamate-1-semialdehyde 2,1-aminomutase (427 aa).

K265 carries the post-translational modification N6-(pyridoxal phosphate)lysine.

The protein belongs to the class-III pyridoxal-phosphate-dependent aminotransferase family. HemL subfamily. In terms of assembly, homodimer. Pyridoxal 5'-phosphate is required as a cofactor.

The protein localises to the cytoplasm. It carries out the reaction (S)-4-amino-5-oxopentanoate = 5-aminolevulinate. Its pathway is porphyrin-containing compound metabolism; protoporphyrin-IX biosynthesis; 5-aminolevulinate from L-glutamyl-tRNA(Glu): step 2/2. The chain is Glutamate-1-semialdehyde 2,1-aminomutase from Burkholderia cenocepacia (strain HI2424).